The sequence spans 449 residues: Probable glycine dehydrogenase (decarboxylating) subunit 1 (449 aa).

Belongs to the GcvP family. N-terminal subunit subfamily. In terms of assembly, the glycine cleavage system is composed of four proteins: P, T, L and H. In this organism, the P 'protein' is a heterodimer of two subunits.

The catalysed reaction is N(6)-[(R)-lipoyl]-L-lysyl-[glycine-cleavage complex H protein] + glycine + H(+) = N(6)-[(R)-S(8)-aminomethyldihydrolipoyl]-L-lysyl-[glycine-cleavage complex H protein] + CO2. Its function is as follows. The glycine cleavage system catalyzes the degradation of glycine. The P protein binds the alpha-amino group of glycine through its pyridoxal phosphate cofactor; CO(2) is released and the remaining methylamine moiety is then transferred to the lipoamide cofactor of the H protein. The sequence is that of Probable glycine dehydrogenase (decarboxylating) subunit 1 from Oceanobacillus iheyensis (strain DSM 14371 / CIP 107618 / JCM 11309 / KCTC 3954 / HTE831).